Here is a 150-residue protein sequence, read N- to C-terminus: Large-conductance mechanosensitive channel (150 aa).

A run of 2 helical transmembrane segments spans residues 14–34 and 81–101; these read VIDL…VTSL and GLFI…FIVI.

Belongs to the MscL family. Homopentamer.

The protein resides in the cell membrane. In terms of biological role, channel that opens in response to stretch forces in the membrane lipid bilayer. May participate in the regulation of osmotic pressure changes within the cell. The polypeptide is Large-conductance mechanosensitive channel (Desulfitobacterium hafniense (strain DSM 10664 / DCB-2)).